We begin with the raw amino-acid sequence, 44 residues long: Large ribosomal subunit protein bL34 (44 aa).

It belongs to the bacterial ribosomal protein bL34 family.

The protein is Large ribosomal subunit protein bL34 of Wolbachia sp. subsp. Brugia malayi (strain TRS).